Here is a 71-residue protein sequence, read N- to C-terminus: Large ribosomal subunit protein bL31 (71 aa).

Residues Cys16, Cys18, Cys37, and Cys40 each contribute to the Zn(2+) site.

The protein belongs to the bacterial ribosomal protein bL31 family. Type A subfamily. Part of the 50S ribosomal subunit. Zn(2+) serves as cofactor.

In terms of biological role, binds the 23S rRNA. In Pseudoalteromonas atlantica (strain T6c / ATCC BAA-1087), this protein is Large ribosomal subunit protein bL31.